The chain runs to 385 residues: 3,5,7-trioxododecanoyl-CoA synthase (385 aa).

The active site involves Cys-157.

The protein belongs to the thiolase-like superfamily. Chalcone/stilbene synthases family. In terms of tissue distribution, expressed in bracts, flowers and young leaves. Not detected in mature leaves, roots and stems. Expressed in glandular trichomes.

It catalyses the reaction hexanoyl-CoA + 3 malonyl-CoA + 3 H(+) = 3,5,7-trioxododecanoyl-CoA + 3 CO2 + 3 CoA. The enzyme catalyses 3,5,7-trioxododecanoyl-CoA = olivetol + CO2 + CoA. It functions in the pathway secondary metabolite biosynthesis; terpenoid biosynthesis. Its function is as follows. Involved in the biosynthesis of cannabinoids-related terpenophenolic natural products, which have pharmacological activity. Polyketide synthase responsible for olivetol biosynthesis, from a C(12)-polyketide, probably 3,5,7-trioxododecanoyl-CoA. Catalyzes the first step in the cannabinoids biosynthetic pathway. The preferred substrate is hexanoyl-CoA, but also accepts CoA esters with C4 to C8 aliphatic side chains. When using malonyl-CoA and hexanoyl-CoA as substrates, produces undetermined compounds distinct form olivetol or olivetolic acid that could be hexanoyl triacetic acid lactone (HTAL) and pentyl diacetic acid lactone (PDAL). Produces olivetolic acid when acting in concert with olivetolic acid cyclase (OAC). This Cannabis sativa (Hemp) protein is 3,5,7-trioxododecanoyl-CoA synthase.